Here is a 363-residue protein sequence, read N- to C-terminus: MKILLFVTLIALAFVALCSAEGNVVVLSPDNFDTVVDGSKTVFVKFYAPWCGHCKKLAPDFEILADTFAPVSNKVVIAKVDCDQADNKALCSKYDVSGYPTLKIFDKSTTAKDYNGARSVDELLTYINNHAKTNVKVKKAPSNVVDLSPSNFDSVVLDKSKNVLVEFYAPWCGHCKKLMPDYEILGNTYANEKDVVIAKIDCDAADNKAICSKYGVTGFPTLKWFGKQSKDGEKYEQGRDLDTFINYINKQAGVNRVKGGKLAVGAGRVEQLDTIATEFIAAAAEVRKELVKKAQTVVDSLPEELRTEGSYYVKVMKTIAEKSIDFVTTEIARITKLVSGSMSGKKADEFAKKLNILESFKSK.

The N-terminal stretch at 1–20 (MKILLFVTLIALAFVALCSA) is a signal peptide. 2 Thioredoxin domains span residues 21 to 132 (EGNV…NHAK) and 133 to 285 (TNVK…AAAE). Residues cysteine 51, cysteine 54, cysteine 172, and cysteine 175 each act as nucleophile in the active site. Cystine bridges form between cysteine 51/cysteine 54 and cysteine 172/cysteine 175.

Belongs to the protein disulfide isomerase family.

Its subcellular location is the endoplasmic reticulum lumen. The enzyme catalyses Catalyzes the rearrangement of -S-S- bonds in proteins.. Its function is as follows. Participates in the folding of proteins containing disulfide bonds, may be involved in glycosylation, prolyl hydroxylation and triglyceride transfer. In Dictyostelium discoideum (Social amoeba), this protein is Protein disulfide-isomerase 1 (pdi1).